The chain runs to 29 residues: Conotoxin Bu17 (29 aa).

Disulfide bonds link Cys4–Cys19, Cys5–Cys25, and Cys15–Cys26. At Cys26 the chain carries Cysteine amide.

It belongs to the conotoxin M superfamily. As to expression, expressed by the venom duct.

The protein localises to the secreted. The protein is Conotoxin Bu17 of Conus bullatus (Bubble cone).